Here is a 288-residue protein sequence, read N- to C-terminus: Pyridoxal kinase PdxY (288 aa).

Substrate is bound by residues S12 and 47–48 (TQ). Residues D114, E151, K184, and 211 to 214 (RPLL) each bind ATP. D225 contacts substrate.

This sequence belongs to the pyridoxine kinase family. PdxY subfamily. In terms of assembly, homodimer. Mg(2+) serves as cofactor.

The catalysed reaction is pyridoxal + ATP = pyridoxal 5'-phosphate + ADP + H(+). The protein operates within cofactor metabolism; pyridoxal 5'-phosphate salvage; pyridoxal 5'-phosphate from pyridoxal: step 1/1. Functionally, pyridoxal kinase involved in the salvage pathway of pyridoxal 5'-phosphate (PLP). Catalyzes the phosphorylation of pyridoxal to PLP. The chain is Pyridoxal kinase PdxY from Pseudomonas syringae pv. syringae (strain B728a).